Reading from the N-terminus, the 88-residue chain is MANIKSQIKRNRQNEKRRLRNKSVKSSLKTAIRKFHEAAETGDVEKATVLMRDAARKLDKAASKGVIHANQAANRKSAIAKRVASFSA.

A disordered region spans residues 1–28 (MANIKSQIKRNRQNEKRRLRNKSVKSSL). Basic residues predominate over residues 7–23 (QIKRNRQNEKRRLRNKS).

This sequence belongs to the bacterial ribosomal protein bS20 family.

Functionally, binds directly to 16S ribosomal RNA. The sequence is that of Small ribosomal subunit protein bS20 from Salinispora tropica (strain ATCC BAA-916 / DSM 44818 / JCM 13857 / NBRC 105044 / CNB-440).